The primary structure comprises 349 residues: Heat-inducible transcription repressor HrcA (349 aa).

It belongs to the HrcA family.

In terms of biological role, negative regulator of class I heat shock genes (grpE-dnaK-dnaJ and groELS operons). Prevents heat-shock induction of these operons. The sequence is that of Heat-inducible transcription repressor HrcA from Lactobacillus acidophilus (strain ATCC 700396 / NCK56 / N2 / NCFM).